A 367-amino-acid polypeptide reads, in one-letter code: tRNA/tmRNA (uracil-C(5))-methyltransferase (367 aa).

Residues Q190, Y218, N223, E239, and D299 each contribute to the S-adenosyl-L-methionine site. Catalysis depends on C324, which acts as the Nucleophile. The Proton acceptor role is filled by E358.

Belongs to the class I-like SAM-binding methyltransferase superfamily. RNA M5U methyltransferase family. TrmA subfamily.

The catalysed reaction is uridine(54) in tRNA + S-adenosyl-L-methionine = 5-methyluridine(54) in tRNA + S-adenosyl-L-homocysteine + H(+). It carries out the reaction uridine(341) in tmRNA + S-adenosyl-L-methionine = 5-methyluridine(341) in tmRNA + S-adenosyl-L-homocysteine + H(+). In terms of biological role, dual-specificity methyltransferase that catalyzes the formation of 5-methyluridine at position 54 (m5U54) in all tRNAs, and that of position 341 (m5U341) in tmRNA (transfer-mRNA). The polypeptide is tRNA/tmRNA (uracil-C(5))-methyltransferase (Pectobacterium carotovorum subsp. carotovorum (strain PC1)).